A 296-amino-acid chain; its full sequence is Nitrogenase iron protein 2 (296 aa).

11–18 (GKGGIGKS) is a binding site for ATP. [4Fe-4S] cluster is bound at residue Cys-99. Arg-102 is modified (ADP-ribosylarginine; by dinitrogenase reductase ADP-ribosyltransferase). [4Fe-4S] cluster is bound at residue Cys-133.

This sequence belongs to the NifH/BchL/ChlL family. As to quaternary structure, homodimer. Requires [4Fe-4S] cluster as cofactor. Post-translationally, the reversible ADP-ribosylation of Arg-102 inactivates the nitrogenase reductase and regulates nitrogenase activity.

It catalyses the reaction N2 + 8 reduced [2Fe-2S]-[ferredoxin] + 16 ATP + 16 H2O = H2 + 8 oxidized [2Fe-2S]-[ferredoxin] + 2 NH4(+) + 16 ADP + 16 phosphate + 6 H(+). Functionally, the key enzymatic reactions in nitrogen fixation are catalyzed by the nitrogenase complex, which has 2 components: the iron protein and the molybdenum-iron protein. This Azorhizobium caulinodans (strain ATCC 43989 / DSM 5975 / JCM 20966 / LMG 6465 / NBRC 14845 / NCIMB 13405 / ORS 571) protein is Nitrogenase iron protein 2 (nifH2).